A 561-amino-acid polypeptide reads, in one-letter code: Acylcarnitine hydrolase (561 aa).

The first 26 residues, 1 to 26 (MARKQPHSWLNAVLFGLLLILIHVWG), serve as a signal peptide directing secretion. Cysteines 97 and 125 form a disulfide. Serine 230 (acyl-ester intermediate) is an active-site residue. Cysteine 282 and cysteine 293 form a disulfide bridge. Active-site charge relay system residues include glutamate 347 and histidine 459.

It belongs to the type-B carboxylesterase/lipase family. In terms of tissue distribution, expressed in liver, stomach and kidney.

The protein localises to the microsome. Its subcellular location is the endoplasmic reticulum. It carries out the reaction all-trans-retinyl hexadecanoate + H2O = all-trans-retinol + hexadecanoate + H(+). The catalysed reaction is an O-acyl-(R)-carnitine + H2O = (R)-carnitine + a fatty acid + H(+). Functionally, hydrolase with high activity towards palmitoylcarnitine. Is also active with p-nitrophenylacetate and alpha-naphthylacetate. May also hydrolyze retinyl esters. This chain is Acylcarnitine hydrolase, found in Rattus norvegicus (Rat).